Here is a 545-residue protein sequence, read N- to C-terminus: CTP synthase (545 aa).

The interval methionine 1–leucine 266 is amidoligase domain. Serine 14 is a binding site for CTP. Position 14 (serine 14) interacts with UTP. ATP-binding positions include serine 15 to isoleucine 20 and aspartate 72. Mg(2+)-binding residues include aspartate 72 and glutamate 140. Residues aspartate 147–glutamate 149, lysine 187–glutamine 192, and lysine 223 each bind CTP. UTP-binding positions include lysine 187–glutamine 192 and lysine 223. An ATP-binding site is contributed by lysine 239–valine 241. The Glutamine amidotransferase type-1 domain occupies threonine 291–arginine 542. Residue glycine 352 participates in L-glutamine binding. Cysteine 379 acts as the Nucleophile; for glutamine hydrolysis in catalysis. L-glutamine-binding positions include leucine 380 to glutamine 383, glutamate 403, and arginine 470. Residues histidine 515 and glutamate 517 contribute to the active site.

This sequence belongs to the CTP synthase family. Homotetramer.

The enzyme catalyses UTP + L-glutamine + ATP + H2O = CTP + L-glutamate + ADP + phosphate + 2 H(+). It catalyses the reaction L-glutamine + H2O = L-glutamate + NH4(+). The catalysed reaction is UTP + NH4(+) + ATP = CTP + ADP + phosphate + 2 H(+). It participates in pyrimidine metabolism; CTP biosynthesis via de novo pathway; CTP from UDP: step 2/2. Allosterically activated by GTP, when glutamine is the substrate; GTP has no effect on the reaction when ammonia is the substrate. The allosteric effector GTP functions by stabilizing the protein conformation that binds the tetrahedral intermediate(s) formed during glutamine hydrolysis. Inhibited by the product CTP, via allosteric rather than competitive inhibition. In terms of biological role, catalyzes the ATP-dependent amination of UTP to CTP with either L-glutamine or ammonia as the source of nitrogen. Regulates intracellular CTP levels through interactions with the four ribonucleotide triphosphates. This chain is CTP synthase, found in Enterobacter sp. (strain 638).